Here is a 522-residue protein sequence, read N- to C-terminus: Kelch domain-containing protein 4 (522 aa).

The segment covering 1–10 (MGKKGKKEKK) has biased composition (basic residues). The segment at 1 to 33 (MGKKGKKEKKGRGAEKTAAKMEKKVSKRSRKEE) is disordered. The segment covering 11-24 (GRGAEKTAAKMEKK) has biased composition (basic and acidic residues). 5 Kelch repeats span residues 77 to 129 (ELIL…VVPQ), 133 to 187 (QLWV…AWKR), 188 to 241 (QLIL…VTPQ), 243 to 289 (GIII…MNPS), and 308 to 361 (QTLF…RRGR). Disordered regions lie at residues 346–378 (QLKG…GAGT), 402–432 (LAAP…PCPR), and 481–522 (DPET…GAED). 2 positions are modified to phosphoserine: Ser-413 and Ser-418. One copy of the Kelch 6 repeat lies at 443–494 (VLYVYGGMFEAGDRQVTLSDLHCLDLHRMEAWKALVEMDPETQEWLEETDSE).

The chain is Kelch domain-containing protein 4 (KLHDC4) from Pongo abelii (Sumatran orangutan).